Reading from the N-terminus, the 513-residue chain is Cytochrome P450 monooxygenase sthF (513 aa).

2 helical membrane-spanning segments follow: residues 13–33 and 212–232; these read FPSL…YIFI and MLHP…IILL. Cysteine 452 provides a ligand contact to heme.

This sequence belongs to the cytochrome P450 family. The cofactor is heme.

Its subcellular location is the membrane. It carries out the reaction dehydroprobetaenone I + NADPH + O2 + H(+) = epoxybetaenone + NADP(+) + H2O. It catalyses the reaction dehydroprobetaenone I + 3 NADPH + 3 O2 + 3 H(+) = betaenone C + 3 NADP(+) + 3 H2O. The catalysed reaction is probetaenone I + 3 NADPH + 3 O2 + 3 H(+) = betaenone B + 3 NADP(+) + 3 H2O. The protein operates within mycotoxin biosynthesis. Functionally, cytochrome P450 monooxygenase; part of the gene cluster that mediates the biosynthesis of the phytotoxin stemphyloxin II. The first step of the pathway is the synthesis of dehydroprobetaenone I by the polyketide synthase sthA and the enoyl reductase sthE via condensation of one acetyl-CoA starter unit with 7 malonyl-CoA units and 5 methylations. The C-terminal reductase (R) domain of sthA catalyzes the reductive release of the polyketide chain. Because sthA lacks a designated enoylreductase (ER) domain, the required activity is provided the enoyl reductase sthE. The short-chain dehydrogenase/reductase sthC then catalyzes reduction of dehydroprobetaenone I to probetaenone I. The cytochrome P450 monooxygenase sthF catalyzes successive epoxidation, oxidation (resulting from epoxide opening) and hydroxylation to install a tertiary alcohol in the decaline ring to yield betaenone C from dehydroprobetaenone I and betaenone B from probetaenone I. The FAD-linked oxidoreductase sthB is responsible for the conversion of betaenone C to betaenone A via an intramolecular aldol reaction between C-1 and C-17 to form the bridged tricyclic system in betaenone A. Finally, the cytochrome P450 monooxygenase sthD catalyzes the hydroxylation of C-15 to afford the final metabolite stemphyloxin II. The protein is Cytochrome P450 monooxygenase sthF of Phaeosphaeria nodorum (strain SN15 / ATCC MYA-4574 / FGSC 10173) (Glume blotch fungus).